The primary structure comprises 387 residues: Phosphoglycerate kinase (387 aa).

Substrate-binding positions include 21–23, arginine 36, 59–62, arginine 113, and arginine 146; these read DLN and HLGR. Residues lysine 197, glutamate 314, and 340–343 each bind ATP; that span reads GGDT.

The protein belongs to the phosphoglycerate kinase family. Monomer.

Its subcellular location is the cytoplasm. It catalyses the reaction (2R)-3-phosphoglycerate + ATP = (2R)-3-phospho-glyceroyl phosphate + ADP. Its pathway is carbohydrate degradation; glycolysis; pyruvate from D-glyceraldehyde 3-phosphate: step 2/5. This Pseudomonas putida (strain W619) protein is Phosphoglycerate kinase.